The following is a 127-amino-acid chain: Aspartate 1-decarboxylase (127 aa).

The active-site Schiff-base intermediate with substrate; via pyruvic acid is Ser-25. Position 25 is a pyruvic acid (Ser) (Ser-25). Substrate is bound at residue Thr-57. Tyr-58 functions as the Proton donor in the catalytic mechanism. Residue 73–75 participates in substrate binding; it reads GAA.

It belongs to the PanD family. As to quaternary structure, heterooctamer of four alpha and four beta subunits. It depends on pyruvate as a cofactor. In terms of processing, is synthesized initially as an inactive proenzyme, which is activated by self-cleavage at a specific serine bond to produce a beta-subunit with a hydroxyl group at its C-terminus and an alpha-subunit with a pyruvoyl group at its N-terminus.

Its subcellular location is the cytoplasm. The catalysed reaction is L-aspartate + H(+) = beta-alanine + CO2. Its pathway is cofactor biosynthesis; (R)-pantothenate biosynthesis; beta-alanine from L-aspartate: step 1/1. Its function is as follows. Catalyzes the pyruvoyl-dependent decarboxylation of aspartate to produce beta-alanine. In Aliarcobacter butzleri (strain RM4018) (Arcobacter butzleri), this protein is Aspartate 1-decarboxylase.